A 1462-amino-acid polypeptide reads, in one-letter code: Trifunctional nucleotide phosphoesterase protein YfkN (1462 aa).

The N-terminal stretch at 1 to 35 (MRIQKRRTHVENILRILLPPIMILSLILPTPPIHA) is a signal peptide. Residues 36–623 (EESAAPQVHL…GTNLTFESSL (588 aa)) form a 2',3'-cyclic nucleotide 2'-phosphodiesterase/3'-nucleotidase region. A divalent metal cation is bound by residues Asp52, His54, Asp97, Asn141, His249, His282, and His284. Residues Tyr458 and 561–567 (YRASGGG) contribute to the a ribonucleoside 3'-phosphate site. A 5'-nucleotidase region spans residues 624–1427 (LAKPFADKAD…GPAGGLLPDT (804 aa)). The a divalent metal cation site is built by Asp676, His678, Asp708, Asn740, His872, His895, and His897. Residues Phe1047 and 1127-1133 (FVGAGGD) each bind a ribonucleoside 5'-phosphate. The disordered stretch occupies residues 1350–1422 (ILNSGSNNKP…GSGTDGPAGG (73 aa)). Over residues 1405-1421 (GSGGNGSGGSGTDGPAG) the composition is skewed to gly residues. The LPXTG sorting signal motif lies at 1424–1428 (LPDTA). Thr1427 carries the post-translational modification Pentaglycyl murein peptidoglycan amidated threonine. The propeptide at 1428 to 1462 (ATSMYSILLAGFLISALGTAMYLHQRRKQNRANQA) is removed by sortase.

The protein belongs to the 5'-nucleotidase family. Requires a divalent metal cation as cofactor.

Its subcellular location is the secreted. The protein localises to the cell wall. It catalyses the reaction a nucleoside 2',3'-cyclic phosphate + H2O = a nucleoside 3'-phosphate + H(+). It carries out the reaction a ribonucleoside 3'-phosphate + H2O = a ribonucleoside + phosphate. The catalysed reaction is a ribonucleoside 5'-phosphate + H2O = a ribonucleoside + phosphate. Its function is as follows. Catalyzes the release of inorganic phosphate from 2',3'-cyclic nucleotides through consecutive 2',3'-phosphodiesterase and 3'- (or 2') nucleotidase activities. Also possesses a 5'-nucleotidase activity. Does not catalyze the release of inorganic phosphate from 3',5'-cyclic nucleotides. Probably plays a role in the cellular reprocessing of nucleotides present in the medium, under conditions of phosphate shortage. This Bacillus subtilis (strain 168) protein is Trifunctional nucleotide phosphoesterase protein YfkN (yfkN).